The sequence spans 256 residues: Follistatin-related protein 3 (256 aa).

A signal peptide spans 1-23 (MRPGALWPLLWGALVWAVGSVGA). In terms of domain architecture, TB spans 34–105 (GVCWLQQGKE…SCDGVECGPG (72 aa)). 8 disulfides stabilise this stretch: cysteine 36–cysteine 59, cysteine 46–cysteine 90, cysteine 60–cysteine 93, cysteine 97–cysteine 108, cysteine 102–cysteine 117, cysteine 119–cysteine 151, cysteine 123–cysteine 144, and cysteine 133–cysteine 165. Asparagine 71 is a glycosylation site (N-linked (GlcNAc...) asparagine). Residues 97 to 117 (CDGVECGPGKACRMLGGRPHC) form the Follistatin-like 1 domain. Kazal-like domains are found at residues 111-167 (LGGR…RCQK) and 187-243 (SAHC…ICTG). A Follistatin-like 2 domain is found at 168–191 (SCAQVVCPRPQSCLVDQTGSAHCV). Cystine bridges form between cysteine 193-cysteine 227, cysteine 198-cysteine 220, and cysteine 209-cysteine 241. The N-linked (GlcNAc...) asparagine glycan is linked to asparagine 213.

As to quaternary structure, interacts with INHBA and INHBB. Interacts with FN1. Interacts with ADAM12. Interacts with MLLT10; the interaction enhances MLLT10 in vitro transcriptional activity and self-association. Interacts with MSTN.

The protein resides in the secreted. It localises to the nucleus. The secreted form is a binding and antagonizing protein for members of the TGF-beta family, such as activin, BMP2 and MSTN. Inhibits activin A-, activin B-, BMP2- and MSDT-induced cellular signaling; more effective on activin A than on activin B. Involved in bone formation; inhibits osteoclast differentiation. Involved in hematopoiesis; involved in differentiation of hemopoietic progenitor cells, increases hematopoietic cell adhesion to fibronectin and seems to contribute to the adhesion of hematopoietic precursor cells to the bone marrow stroma. The nuclear form is probably involved in transcriptional regulation via interaction with MLLT10. In Rattus norvegicus (Rat), this protein is Follistatin-related protein 3 (Fstl3).